A 295-amino-acid polypeptide reads, in one-letter code: Glutamyl-Q tRNA(Asp) synthetase (295 aa).

L-glutamate contacts are provided by residues 6–10 and glutamate 42; that span reads RFAPS. The 'HIGH' region signature appears at 9-19; the sequence is PSPTGAMHLGN. 4 residues coordinate Zn(2+): cysteine 93, cysteine 95, tyrosine 118, and cysteine 122. L-glutamate contacts are provided by tyrosine 177 and arginine 195. The 'KMSKS' region signature appears at 233-237; the sequence is RLAKR. Lysine 236 provides a ligand contact to ATP.

The protein belongs to the class-I aminoacyl-tRNA synthetase family. GluQ subfamily. Requires Zn(2+) as cofactor.

In terms of biological role, catalyzes the tRNA-independent activation of glutamate in presence of ATP and the subsequent transfer of glutamate onto a tRNA(Asp). Glutamate is transferred on the 2-amino-5-(4,5-dihydroxy-2-cyclopenten-1-yl) moiety of the queuosine in the wobble position of the QUC anticodon. The polypeptide is Glutamyl-Q tRNA(Asp) synthetase (Deinococcus radiodurans (strain ATCC 13939 / DSM 20539 / JCM 16871 / CCUG 27074 / LMG 4051 / NBRC 15346 / NCIMB 9279 / VKM B-1422 / R1)).